The following is a 209-amino-acid chain: ATP-dependent Clp protease proteolytic subunit (209 aa).

The active-site Nucleophile is the Ser106. Residue His131 is part of the active site.

It belongs to the peptidase S14 family. In terms of assembly, fourteen ClpP subunits assemble into 2 heptameric rings which stack back to back to give a disk-like structure with a central cavity, resembling the structure of eukaryotic proteasomes.

The protein localises to the cytoplasm. The catalysed reaction is Hydrolysis of proteins to small peptides in the presence of ATP and magnesium. alpha-casein is the usual test substrate. In the absence of ATP, only oligopeptides shorter than five residues are hydrolyzed (such as succinyl-Leu-Tyr-|-NHMec, and Leu-Tyr-Leu-|-Tyr-Trp, in which cleavage of the -Tyr-|-Leu- and -Tyr-|-Trp bonds also occurs).. Functionally, cleaves peptides in various proteins in a process that requires ATP hydrolysis. Has a chymotrypsin-like activity. Plays a major role in the degradation of misfolded proteins. In Brucella suis biovar 1 (strain 1330), this protein is ATP-dependent Clp protease proteolytic subunit.